The sequence spans 677 residues: Mitochondrial 15S rRNA processing factor ppr3 (677 aa).

A mitochondrion-targeting transit peptide spans 1-43; sequence MFTEICGKLRTCIYKKVAFSRPLGCNLRQLPVFRDFHNSVSCL. 6 PPR repeats span residues 210-244, 245-279, 280-314, 317-351, 355-390, and 569-604; these read SVYL…QLKP, DNYT…KIEA, NTHV…SLQS, DDKT…PINP, SSRT…QWKP, and DIHV…SYLP.

Belongs to the CCM1 family. As to quaternary structure, binds to mitochondrial small subunit 15S rRNA.

Its subcellular location is the mitochondrion. Its function is as follows. Regulates mitochondrial small subunit maturation by controlling 15S rRNA 5'-end processing. Localizes to the 5' precursor of the 15S rRNA in a position that is subsequently occupied by mS47 in the mature yeast mtSSU. Uses structure and sequence-specific RNA recognition, binding to a single-stranded region of the precursor and specifically recognizing bases -6 to -1. The exchange of Ccm1 for mS47 is coupled to the irreversible removal of precursor rRNA that is accompanied by conformational changes of the mitoribosomal proteins uS5m and mS26. These conformational changes signal completion of 5'-end rRNA processing through protection of the mature 5'-end of the 15S rRNA and stabilization of mS47. The removal of the 5' precursor together with the dissociation of Ccm1 may be catalyzed by the 5'-3' exoribonuclease Pet127. Involved in the specific removal of group I introns in mitochondrial encoded transcripts. The chain is Mitochondrial 15S rRNA processing factor ppr3 (dmr1) from Schizosaccharomyces japonicus (strain yFS275 / FY16936) (Fission yeast).